Reading from the N-terminus, the 179-residue chain is NADH-quinone oxidoreductase subunit B 1 (179 aa).

4 residues coordinate [4Fe-4S] cluster: C38, C39, C104, and C133.

Belongs to the complex I 20 kDa subunit family. NDH-1 is composed of 14 different subunits. Subunits NuoB, C, D, E, F, and G constitute the peripheral sector of the complex. Requires [4Fe-4S] cluster as cofactor.

The protein resides in the cell membrane. The catalysed reaction is a quinone + NADH + 5 H(+)(in) = a quinol + NAD(+) + 4 H(+)(out). NDH-1 shuttles electrons from NADH, via FMN and iron-sulfur (Fe-S) centers, to quinones in the respiratory chain. The immediate electron acceptor for the enzyme in this species is believed to be ubiquinone. Couples the redox reaction to proton translocation (for every two electrons transferred, four hydrogen ions are translocated across the cytoplasmic membrane), and thus conserves the redox energy in a proton gradient. The sequence is that of NADH-quinone oxidoreductase subunit B 1 from Herpetosiphon aurantiacus (strain ATCC 23779 / DSM 785 / 114-95).